The following is a 371-amino-acid chain: Cyanide hydratase (371 aa).

Positions 8 to 286 (YKAAAVQAEP…EGLMFVEIDL (279 aa)) constitute a CN hydrolase domain. E48 acts as the Proton acceptor in catalysis. K130 is an active-site residue. Catalysis depends on C165, which acts as the Nucleophile. Residues 326–356 (DGGIGTYNTQDRVGLNRPLDAPKVDGPSGVS) are disordered.

Belongs to the carbon-nitrogen hydrolase superfamily. Nitrilase family. As to quaternary structure, oligomer of dimers, forming left-handed helical fibers.

The catalysed reaction is formamide = hydrogen cyanide + H2O. Its function is as follows. Catalyzes the hydration of cyanide to formamide. Degradation of cyanide may be important for plant pathogenic fungi in infection of cyanogenic plants. Can also transform some nitriles like 2-cyanopyridine and fumaronitrile and has a minor activity with 4-cyanophenyl acetonitrile (4-CPA). This chain is Cyanide hydratase, found in Botryotinia fuckeliana (strain T4) (Noble rot fungus).